Reading from the N-terminus, the 896-residue chain is Microsomal triglyceride transfer protein large subunit (896 aa).

The first 21 residues, 1–21 (MILLAVLFLCFFSSYSASVKG), serve as a signal peptide directing secretion. In terms of domain architecture, Vitellogenin spans 28-659 (LNNERLYKLT…IFQYIGKAEL (632 aa)). Residues cysteine 174 and cysteine 194 are joined by a disulfide bond.

As to quaternary structure, heterodimer; heterodimerizes with the protein disulfide isomerase (P4HB/PDI). Interacts with APOB. Interacts with PRAP1.

The protein localises to the endoplasmic reticulum. It localises to the golgi apparatus. The catalysed reaction is a 1,2-diacyl-sn-glycero-3-phosphocholine(in) = a 1,2-diacyl-sn-glycero-3-phosphocholine(out). It carries out the reaction a 1,2-diacyl-sn-glycero-3-phosphoethanolamine(in) = a 1,2-diacyl-sn-glycero-3-phosphoethanolamine(out). It catalyses the reaction a cholesterol ester(in) = a cholesterol ester(out). The enzyme catalyses a triacyl-sn-glycerol(in) = a triacyl-sn-glycerol(out). In terms of biological role, catalyzes the transport of triglyceride, cholesteryl ester, and phospholipid between phospholipid surfaces. Required for the assembly and secretion of plasma lipoproteins that contain apolipoprotein B. May be involved in regulating cholesteryl ester biosynthesis in cells that produce lipoproteins. This Rattus norvegicus (Rat) protein is Microsomal triglyceride transfer protein large subunit (Mttp).